The following is a 445-amino-acid chain: 26S proteasome regulatory subunit RPN5 (445 aa).

Position 2 is an N-acetylserine (S2). A PCI domain is found at 233–407; it reads EYLEVAQYLQ…KIVNFEKPKN (175 aa).

Belongs to the proteasome subunit p55 family. Post-translationally, N-acetylated by NAT1.

Acts as a regulatory subunit of the 26S proteasome which is involved in the ATP-dependent degradation of ubiquitinated proteins. The protein is 26S proteasome regulatory subunit RPN5 (RPN5) of Saccharomyces cerevisiae (strain ATCC 204508 / S288c) (Baker's yeast).